Reading from the N-terminus, the 79-residue chain is Conotoxin Leo-O4 (79 aa).

Positions 1–22 (MKLTCMMLVAVLFLTAWTFVTA) are cleaved as a signal peptide. A propeptide spanning residues 23–51 (NVSRNGLENLFPEERHEMMNPNAAKLNNR) is cleaved from the precursor. 3 cysteine pairs are disulfide-bonded: C53-C70, C60-C74, and C69-C78.

This sequence belongs to the conotoxin O1 superfamily. In terms of tissue distribution, expressed by the venom duct.

It is found in the secreted. The chain is Conotoxin Leo-O4 from Conus leopardus (Leopard cone).